The following is a 159-amino-acid chain: MAVLWRLSAVCGALGGRALLLRTPVVRPAHISAFLQDRPIPEWCGVQHIHLSPSHHSGSKAASLHWTSERVVSVLLLGLLPAAYLNPCSAMDYSLAAALTLHGHWGLGQVVTDYVHGDALQKAAKAGLLALSALTFAGLCYFNYHDVGICKAVAMLWKL.

The transit peptide at 1–56 (MAVLWRLSAVCGALGGRALLLRTPVVRPAHISAFLQDRPIPEWCGVQHIHLSPSHH) directs the protein to the mitochondrion. At 57-63 (SGSKAAS) the chain is on the mitochondrial matrix side. A helical transmembrane segment spans residues 64–85 (LHWTSERVVSVLLLGLLPAAYL). Topologically, residues 86-90 (NPCSA) are mitochondrial intermembrane. A helical membrane pass occupies residues 91–111 (MDYSLAAALTLHGHWGLGQVV). His102 contacts heme b. Topologically, residues 112-122 (TDYVHGDALQK) are mitochondrial matrix. Tyr114 lines the a ubiquinone pocket. The helical transmembrane segment at 123-144 (AAKAGLLALSALTFAGLCYFNY) threads the bilayer. Over 145–159 (HDVGICKAVAMLWKL) the chain is Mitochondrial intermembrane.

Belongs to the CybS family. In terms of assembly, component of complex II composed of four subunits: the flavoprotein (FP) SDHA, iron-sulfur protein (IP) SDHB, and a cytochrome b560 composed of SDHC and SDHD.

The protein localises to the mitochondrion inner membrane. The protein operates within carbohydrate metabolism; tricarboxylic acid cycle. Membrane-anchoring subunit of succinate dehydrogenase (SDH) that is involved in complex II of the mitochondrial electron transport chain and is responsible for transferring electrons from succinate to ubiquinone (coenzyme Q). SDH also oxidizes malate to the non-canonical enol form of oxaloacetate, enol-oxaloacetate. Enol-oxaloacetate, which is a potent inhibitor of the succinate dehydrogenase activity, is further isomerized into keto-oxaloacetate. The protein is Succinate dehydrogenase [ubiquinone] cytochrome b small subunit, mitochondrial (SDHD) of Homo sapiens (Human).